Consider the following 426-residue polypeptide: Na(+)/H(+) antiporter 1 (426 aa).

A run of 12 helical transmembrane segments spans residues 1–21 (MELM…SLVA), 29–49 (IPDI…LQII), 57–77 (IFEY…AFTM), 95–115 (ITFL…LNLP), 120–140 (VGYL…IPVF), 158–178 (IFND…FGLF), 184–204 (LIDL…LAKI), 208–228 (IIIH…GAML), 236–256 (LLPS…IMGL), 286–306 (VFIF…NYFI), 309–329 (LLVA…LGLI), and 382–402 (IAGT…ILEA).

The protein belongs to the monovalent cation:proton antiporter 1 (CPA1) transporter (TC 2.A.36) family.

Its subcellular location is the cell membrane. Functionally, this is a Na(+)/H(+) antiporter. Can also transport lithium. This Methanocaldococcus jannaschii (strain ATCC 43067 / DSM 2661 / JAL-1 / JCM 10045 / NBRC 100440) (Methanococcus jannaschii) protein is Na(+)/H(+) antiporter 1.